A 164-amino-acid polypeptide reads, in one-letter code: UPF0304 protein YfbU (164 aa).

Belongs to the UPF0304 family.

In Salmonella choleraesuis (strain SC-B67), this protein is UPF0304 protein YfbU.